The following is a 122-amino-acid chain: Urocortin (122 aa).

The first 25 residues, 1–25, serve as a signal peptide directing secretion; sequence MRQRGRATLLVALLLLVQLRPESSQ. Residues 26-80 constitute a propeptide that is removed on maturation; sequence WSPAAAAANVVQDPNLRWNPGVRNQGGGVRALLLLLAERFPRRAGSEPAGERQRR. At V120 the chain carries Valine amide.

This sequence belongs to the sauvagine/corticotropin-releasing factor/urotensin I family. As to quaternary structure, interacts with CRHR1 and CRHR2 (via their N-terminal extracellular domain).

It is found in the secreted. Functionally, acts in vitro to stimulate the secretion of adrenocorticotropic hormone (ACTH). Binds with high affinity to CRF receptor types 1, 2-alpha, and 2-beta. Plays a role in the establishment of normal hearing thresholds. Reduces food intake and regulates ghrelin levels in gastric body and plasma. The sequence is that of Urocortin (Ucn) from Rattus norvegicus (Rat).